A 420-amino-acid polypeptide reads, in one-letter code: uncharacterized protein (420 aa).

In terms of domain architecture, TRAM spans 7–65 (NIERGSVINVEILNAAHGGQGIAKYDGRVIFVKGAFPGDRLSANITHVKKKFARATIAS). Q245, Y280, E304, and D349 together coordinate S-adenosyl-L-methionine. Catalysis depends on C376, which acts as the Nucleophile.

The protein belongs to the class I-like SAM-binding methyltransferase superfamily. RNA M5U methyltransferase family.

This is an uncharacterized protein from Corynebacterium diphtheriae (strain ATCC 700971 / NCTC 13129 / Biotype gravis).